A 65-amino-acid polypeptide reads, in one-letter code: Small ribosomal subunit protein bS21 (65 aa).

Positions 44–65 (DDRLKRSRGKRRAQRANEERNS) are disordered. Residues 48 to 57 (KRSRGKRRAQ) are compositionally biased toward basic residues.

Belongs to the bacterial ribosomal protein bS21 family.

This chain is Small ribosomal subunit protein bS21, found in Prosthecochloris aestuarii (strain DSM 271 / SK 413).